Consider the following 227-residue polypeptide: Cytochrome c oxidase subunit 2 (227 aa).

Over 1–14 (MAYPFQLGFQDATS) the chain is Mitochondrial intermembrane. A helical membrane pass occupies residues 15–45 (PIMEELLHFHDHTLMIVFLISSLVLYIITLM). Over 46–59 (LTTKLTHTSTMDAQ) the chain is Mitochondrial matrix. A helical membrane pass occupies residues 60–87 (EVETVWTILPAIILILIALPSLRILYMM). Topologically, residues 88–227 (DEVNNPSLTV…IFEKWSASML (140 aa)) are mitochondrial intermembrane. Cu cation contacts are provided by His-161, Cys-196, Glu-198, Cys-200, His-204, and Met-207. Residue Glu-198 participates in Mg(2+) binding.

Belongs to the cytochrome c oxidase subunit 2 family. As to quaternary structure, component of the cytochrome c oxidase (complex IV, CIV), a multisubunit enzyme composed of 14 subunits. The complex is composed of a catalytic core of 3 subunits MT-CO1, MT-CO2 and MT-CO3, encoded in the mitochondrial DNA, and 11 supernumerary subunits COX4I, COX5A, COX5B, COX6A, COX6B, COX6C, COX7A, COX7B, COX7C, COX8 and NDUFA4, which are encoded in the nuclear genome. The complex exists as a monomer or a dimer and forms supercomplexes (SCs) in the inner mitochondrial membrane with NADH-ubiquinone oxidoreductase (complex I, CI) and ubiquinol-cytochrome c oxidoreductase (cytochrome b-c1 complex, complex III, CIII), resulting in different assemblies (supercomplex SCI(1)III(2)IV(1) and megacomplex MCI(2)III(2)IV(2)). Found in a complex with TMEM177, COA6, COX18, COX20, SCO1 and SCO2. Interacts with TMEM177 in a COX20-dependent manner. Interacts with COX20. Interacts with COX16. Cu cation is required as a cofactor.

It is found in the mitochondrion inner membrane. The enzyme catalyses 4 Fe(II)-[cytochrome c] + O2 + 8 H(+)(in) = 4 Fe(III)-[cytochrome c] + 2 H2O + 4 H(+)(out). Functionally, component of the cytochrome c oxidase, the last enzyme in the mitochondrial electron transport chain which drives oxidative phosphorylation. The respiratory chain contains 3 multisubunit complexes succinate dehydrogenase (complex II, CII), ubiquinol-cytochrome c oxidoreductase (cytochrome b-c1 complex, complex III, CIII) and cytochrome c oxidase (complex IV, CIV), that cooperate to transfer electrons derived from NADH and succinate to molecular oxygen, creating an electrochemical gradient over the inner membrane that drives transmembrane transport and the ATP synthase. Cytochrome c oxidase is the component of the respiratory chain that catalyzes the reduction of oxygen to water. Electrons originating from reduced cytochrome c in the intermembrane space (IMS) are transferred via the dinuclear copper A center (CU(A)) of subunit 2 and heme A of subunit 1 to the active site in subunit 1, a binuclear center (BNC) formed by heme A3 and copper B (CU(B)). The BNC reduces molecular oxygen to 2 water molecules using 4 electrons from cytochrome c in the IMS and 4 protons from the mitochondrial matrix. This Balaenoptera borealis (Sei whale) protein is Cytochrome c oxidase subunit 2 (MT-CO2).